Consider the following 459-residue polypeptide: Sperm-tail PG-rich repeat-containing protein 2 (459 aa).

STPGR repeat units lie at residues 21-30, 63-73, 119-148, 157-203, 213-243, 257-268, 351-377, 400-410, and 433-443; these read VGPGSYQVPF, PGPGHYNVSEA, TLGP…NSSG, GPGP…QEKK, TPAP…FGQS, PGPGFYNVLNNT, PAPG…PRSL, GPGPAAYNPVL, and TPGPATYEISQ.

This Homo sapiens (Human) protein is Sperm-tail PG-rich repeat-containing protein 2 (STPG2).